A 205-amino-acid polypeptide reads, in one-letter code: ATP-dependent Clp protease proteolytic subunit (205 aa).

Ser109 serves as the catalytic Nucleophile. The active site involves His134.

This sequence belongs to the peptidase S14 family. As to quaternary structure, fourteen ClpP subunits assemble into 2 heptameric rings which stack back to back to give a disk-like structure with a central cavity, resembling the structure of eukaryotic proteasomes.

The protein resides in the cytoplasm. It catalyses the reaction Hydrolysis of proteins to small peptides in the presence of ATP and magnesium. alpha-casein is the usual test substrate. In the absence of ATP, only oligopeptides shorter than five residues are hydrolyzed (such as succinyl-Leu-Tyr-|-NHMec, and Leu-Tyr-Leu-|-Tyr-Trp, in which cleavage of the -Tyr-|-Leu- and -Tyr-|-Trp bonds also occurs).. Functionally, cleaves peptides in various proteins in a process that requires ATP hydrolysis. Has a chymotrypsin-like activity. Plays a major role in the degradation of misfolded proteins. This chain is ATP-dependent Clp protease proteolytic subunit, found in Buchnera aphidicola subsp. Baizongia pistaciae (strain Bp).